Here is an 80-residue protein sequence, read N- to C-terminus: 17 kDa surface antigen (80 aa).

Residues 47–58 (ALETTPSGTSIE) are compositionally biased toward polar residues. A disordered region spans residues 47-80 (ALETTPSGTSIEWRNPDNGNYGYVTPSKTYKNST).

Belongs to the rickettsiale 17 kDa surface antigen family.

It is found in the cell outer membrane. This is 17 kDa surface antigen (omp) from Rickettsia canadensis.